The sequence spans 783 residues: Protein phosphatase 2C 29 (783 aa).

Positions 151–194 (SFSALPLQPGPDRSGLFMSGPIERGATSGPLDPPAGEISRSNSA) are disordered. At serine 199 the chain carries Phosphoserine. In terms of domain architecture, PPM-type phosphatase spans 260–770 (SSGENDLQWA…DDCTVLVIAL (511 aa)). Mn(2+) is bound by residues aspartate 295 and glycine 296. Residues 555–595 (ETGESVETAERVEERRNDLDRDDGNKEPLVVDSSDSTVNNE) are disordered. Positions 562-580 (TAERVEERRNDLDRDDGNK) are enriched in basic and acidic residues. Residues aspartate 701 and aspartate 761 each contribute to the Mn(2+) site.

It belongs to the PP2C family. It depends on Mg(2+) as a cofactor. Requires Mn(2+) as cofactor. In terms of tissue distribution, expressed in roots, leaves, stems, inflorescences, flowers and developing vascular tissue.

The protein localises to the nucleus. It carries out the reaction O-phospho-L-seryl-[protein] + H2O = L-seryl-[protein] + phosphate. It catalyses the reaction O-phospho-L-threonyl-[protein] + H2O = L-threonyl-[protein] + phosphate. Its function is as follows. Involved in the regulation of pedicel length and of CLAVATA pathways controlling stem cell identity at shoot and flower meristems. The polypeptide is Protein phosphatase 2C 29 (PLL1) (Arabidopsis thaliana (Mouse-ear cress)).